Reading from the N-terminus, the 286-residue chain is Simplagrin (286 aa).

An N-terminal signal peptide occupies residues 1–20 (MKKFCLIFLLLALTALHVKG). The interval 17–179 (HVKGSPIPDE…GSSSGGEESA (163 aa)) is disordered. Composition is skewed to acidic residues over residues 24 to 69 (PDEE…DGQE) and 103 to 129 (VESG…TGGE). Asn116 carries an N-linked (GlcNAc...) asparagine glycan. Residues 166–177 (SNRAGSSSGGEE) are compositionally biased toward low complexity.

Belongs to the aegyptin family. Monomeric in solution; likely has an elongated non-globular form. Interacts with human and rat collagens (via a RGQOGVMGF peptide, where O is hydroxyproline). In terms of processing, not glycosylated. Salivary gland.

It is found in the secreted. Functionally, inhibits host platelet aggregation induced by low concentrations of collagen via blocking the von Willebrand Factor (VWF) interaction with collagen. The polypeptide is Simplagrin (Simulium nigrimanum (Black fly)).